A 253-amino-acid polypeptide reads, in one-letter code: Tetraspanin-3 (253 aa).

The Cytoplasmic portion of the chain corresponds to Met1–Thr11. A helical membrane pass occupies residues Val12–Ala32. Topologically, residues Tyr33 to Thr50 are extracellular. A helical membrane pass occupies residues Leu51–Gly71. At Cys72–Thr85 the chain is on the cytoplasmic side. A helical transmembrane segment spans residues Phe86–Val106. At Tyr107–Val212 the chain is on the extracellular side. Residues Asn127, Asn152, Asn167, and Asn183 are each glycosylated (N-linked (GlcNAc...) asparagine). The chain crosses the membrane as a helical span at residues Ile213–Val233. Topologically, residues Leu234 to Ala253 are cytoplasmic.

Belongs to the tetraspanin (TM4SF) family. In terms of assembly, interacts with claudin-11/CLDN11 and integrins.

Its subcellular location is the membrane. Functionally, regulates the proliferation and migration of oligodendrocytes, a process essential for normal myelination and repair. The polypeptide is Tetraspanin-3 (TSPAN3) (Bos taurus (Bovine)).